Reading from the N-terminus, the 131-residue chain is Small ribosomal subunit protein uS8 (131 aa).

Belongs to the universal ribosomal protein uS8 family. Part of the 30S ribosomal subunit. Contacts proteins S5 and S12.

Functionally, one of the primary rRNA binding proteins, it binds directly to 16S rRNA central domain where it helps coordinate assembly of the platform of the 30S subunit. This chain is Small ribosomal subunit protein uS8, found in Alkalilimnicola ehrlichii (strain ATCC BAA-1101 / DSM 17681 / MLHE-1).